The primary structure comprises 408 residues: Peptidase T (408 aa).

His-78 is a Zn(2+) binding site. The active site involves Asp-80. A Zn(2+)-binding site is contributed by Asp-141. Glu-175 (proton acceptor) is an active-site residue. 3 residues coordinate Zn(2+): Glu-176, Asp-198, and His-380.

It belongs to the peptidase M20B family. The cofactor is Zn(2+).

The protein localises to the cytoplasm. It carries out the reaction Release of the N-terminal residue from a tripeptide.. In terms of biological role, cleaves the N-terminal amino acid of tripeptides. The chain is Peptidase T from Clostridium botulinum (strain Okra / Type B1).